Reading from the N-terminus, the 573-residue chain is Protein DSE1 (573 aa).

WD repeat units follow at residues 144 to 185, 315 to 351, 356 to 395, and 397 to 448; these read DFPP…GCAK, RKNT…GKPV, AKKG…NMKY, and ELVH…NGKG. The segment covering 500 to 509 has biased composition (low complexity); the sequence is SDSSMLSLSN. Positions 500–519 are disordered; it reads SDSSMLSLSNESDHSMTETS. Lys-553 participates in a covalent cross-link: Glycyl lysine isopeptide (Lys-Gly) (interchain with G-Cter in ubiquitin).

Belongs to the WD repeat DSE1 family.

The protein resides in the bud neck. Involved in cell wall metabolism and required for the separation of the mother and daughter cells. This is Protein DSE1 (DSE1) from Saccharomyces cerevisiae (strain ATCC 204508 / S288c) (Baker's yeast).